A 422-amino-acid chain; its full sequence is Probable alpha-1,6-mannosyltransferase MNN11 (422 aa).

The Cytoplasmic segment spans residues 1 to 31; it reads MAIKPRTKGKTYSSRSVGSQWFNRLGFKQNK. The helical; Signal-anchor for type II membrane protein transmembrane segment at 32-52 threads the bilayer; it reads YGTCKFLSIITAFVFILYFFS. At 53 to 422 the chain is on the lumenal side; sequence NRFYPISRSA…GHMYQKIKKS (370 aa).

The protein belongs to the glycosyltransferase 34 family. Component of the M-Pol II complex composed of ANP1, MNN9, MNN10, MNN11 and HOC1.

The protein localises to the golgi apparatus. The protein resides in the cis-Golgi network membrane. In terms of biological role, required for synthesis of full-length mannan chains. Its function is as follows. The M-Pol II complex possesses alpha-1,6-mannosyltransferase activity and is probably involved in the elongation of the mannan backbone of N-linked glycans on cell wall and periplasmic proteins. The polypeptide is Probable alpha-1,6-mannosyltransferase MNN11 (MNN11) (Saccharomyces cerevisiae (strain ATCC 204508 / S288c) (Baker's yeast)).